The chain runs to 711 residues: Polyribonucleotide nucleotidyltransferase (711 aa).

Positions 486 and 492 each coordinate Mg(2+). Residues 553-612 (PRIHTIKINPDKIKDVIGKGGSVIRALTEETGTTIEIEDDGTVKIAATDGEKAKHAIRRI) enclose the KH domain. The S1 motif domain occupies 622–690 (GRVYTGKVTR…RQGRIRLSIK (69 aa)). The tract at residues 689–711 (IKEATEQSQPAAAPEAPAAEQGE) is disordered. Over residues 694–711 (EQSQPAAAPEAPAAEQGE) the composition is skewed to low complexity.

It belongs to the polyribonucleotide nucleotidyltransferase family. Component of the RNA degradosome, which is a multiprotein complex involved in RNA processing and mRNA degradation. Mg(2+) is required as a cofactor.

It is found in the cytoplasm. It carries out the reaction RNA(n+1) + phosphate = RNA(n) + a ribonucleoside 5'-diphosphate. In terms of biological role, involved in mRNA degradation. Catalyzes the phosphorolysis of single-stranded polyribonucleotides processively in the 3'- to 5'-direction. This is Polyribonucleotide nucleotidyltransferase from Escherichia coli (strain ATCC 8739 / DSM 1576 / NBRC 3972 / NCIMB 8545 / WDCM 00012 / Crooks).